Reading from the N-terminus, the 550-residue chain is Glucose-6-phosphate isomerase (550 aa).

E356 (proton donor) is an active-site residue. Active-site residues include H387 and K515.

The protein belongs to the GPI family.

The protein resides in the cytoplasm. It catalyses the reaction alpha-D-glucose 6-phosphate = beta-D-fructose 6-phosphate. It functions in the pathway carbohydrate biosynthesis; gluconeogenesis. Its pathway is carbohydrate degradation; glycolysis; D-glyceraldehyde 3-phosphate and glycerone phosphate from D-glucose: step 2/4. Functionally, catalyzes the reversible isomerization of glucose-6-phosphate to fructose-6-phosphate. This chain is Glucose-6-phosphate isomerase, found in Syntrophobacter fumaroxidans (strain DSM 10017 / MPOB).